The following is a 1026-amino-acid chain: Exportin-T (1026 aa).

Belongs to the exportin family.

It localises to the nucleus. The protein resides in the cytoplasm. In terms of biological role, tRNA nucleus export receptor which facilitates tRNA translocation across the nuclear pore complex. Involved in pre-tRNA splicing, probably by affecting the interaction of pre-tRNA with splicing endonuclease. This is Exportin-T (los1) from Neurospora crassa (strain ATCC 24698 / 74-OR23-1A / CBS 708.71 / DSM 1257 / FGSC 987).